A 310-amino-acid chain; its full sequence is MKVLWAALVVTLLAGCQADVEREPEVQLGNEWAKWQAGQPWEQALGRFWNYLRWVQTLSDQVQEELLSTQATQELTVLIEETMKEVKTYKAELEQQLGPMAQETQARVSKELQAAQARLGADMEDVRNRLVQYRSELQAMMGQSTEELRGRLNSHLRKLRKRLLRDAEDLQKRLAVYQAGIREGAERSVNTLRERLGPLVEQAATVRSLVSKPLQERAEAWGQRLRGRLEKVGIQAGDRLDEVREQVQEVRAKVEEQANQMRLQAEAFHARLKSWFEPLVQDMQQRWAELVEKVQLAVGTSPTSESSEKQ.

An N-terminal signal peptide occupies residues M1 to A18. A run of 8 repeats spans residues V77–G98, P99–G120, A121–G142, Q143–L164, R165–E186, R187–A204, T205–R226, and G227–Q248. The segment at V77–Q248 is 8 X 22 AA approximate tandem repeats. M140 carries the methionine sulfoxide modification. S144 bears the Phosphoserine mark. Positions H155–R165 are LDL and other lipoprotein receptors binding. L159–R162 lines the heparin pocket. A lipid-binding and lipoprotein association region spans residues A203–M283. G222–L229 is a heparin binding site. The tract at residues N259–Q310 is homooligomerization. The tract at residues R271 to M283 is specificity for association with VLDL.

This sequence belongs to the apolipoprotein A1/A4/E family. As to quaternary structure, homotetramer. May interact with ABCA1; functionally associated with ABCA1 in the biogenesis of HDLs. May interact with APP/A4 amyloid-beta peptide; the interaction is extremely stable in vitro but its physiological significance is unclear. May interact with MAPT. May interact with MAP2. In the cerebrospinal fluid, interacts with secreted SORL1. Interacts with PMEL; this allows the loading of PMEL luminal fragment on ILVs to induce fibril nucleation. In terms of processing, APOE exists as multiple glycosylated and sialylated glycoforms within cells and in plasma. The extent of glycosylation and sialylation are tissue and context specific. Glycated in plasma VLDL. Post-translationally, phosphorylated by FAM20C in the extracellular medium.

Its subcellular location is the secreted. The protein resides in the extracellular space. It is found in the extracellular matrix. It localises to the extracellular vesicle. The protein localises to the endosome. Its subcellular location is the multivesicular body. Its function is as follows. APOE is an apolipoprotein, a protein associating with lipid particles, that mainly functions in lipoprotein-mediated lipid transport between organs via the plasma and interstitial fluids. APOE is a core component of plasma lipoproteins and is involved in their production, conversion and clearance. Apolipoproteins are amphipathic molecules that interact both with lipids of the lipoprotein particle core and the aqueous environment of the plasma. As such, APOE associates with chylomicrons, chylomicron remnants, very low density lipoproteins (VLDL) and intermediate density lipoproteins (IDL) but shows a preferential binding to high-density lipoproteins (HDL). It also binds a wide range of cellular receptors including the LDL receptor/LDLR, the LDL receptor-related proteins LRP1, LRP2 and LRP8 and the very low-density lipoprotein receptor/VLDLR that mediate the cellular uptake of the APOE-containing lipoprotein particles. Finally, APOE also has a heparin-binding activity and binds heparan-sulfate proteoglycans on the surface of cells, a property that supports the capture and the receptor-mediated uptake of APOE-containing lipoproteins by cells. A main function of APOE is to mediate lipoprotein clearance through the uptake of chylomicrons, VLDLs, and HDLs by hepatocytes. APOE is also involved in the biosynthesis by the liver of VLDLs as well as their uptake by peripheral tissues ensuring the delivery of triglycerides and energy storage in muscle, heart and adipose tissues. By participating in the lipoprotein-mediated distribution of lipids among tissues, APOE plays a critical role in plasma and tissues lipid homeostasis. APOE is also involved in two steps of reverse cholesterol transport, the HDLs-mediated transport of cholesterol from peripheral tissues to the liver, and thereby plays an important role in cholesterol homeostasis. First, it is functionally associated with ABCA1 in the biogenesis of HDLs in tissues. Second, it is enriched in circulating HDLs and mediates their uptake by hepatocytes. APOE also plays an important role in lipid transport in the central nervous system, regulating neuron survival and sprouting. The sequence is that of Apolipoprotein E (APOE) from Tapirus indicus (Asiatic tapir).